A 576-amino-acid chain; its full sequence is NADH-ubiquinone oxidoreductase chain 5 (576 aa).

Helical transmembrane passes span 6–26 (ISFY…LKFL), 46–66 (IVMT…VLLI), 88–108 (ILLV…PNLI), 109–129 (SILL…IYFQ), 149–169 (VALL…YIFY), 179–199 (MMII…QIPF), 211–231 (TPVS…YLLI), 240–260 (WWMG…AGLG), 270–289 (IIAL…LSMG), 294–316 (AFFH…GSII), 339–359 (CSCF…AGFY), 363–383 (LILE…LFFF), 423–443 (IFFL…LMFL), 459–479 (LFVC…SLFF), 492–512 (FAGS…NYPL), and 556–576 (IYLL…VLVN).

It belongs to the complex I subunit 5 family.

The protein resides in the mitochondrion inner membrane. It catalyses the reaction a ubiquinone + NADH + 5 H(+)(in) = a ubiquinol + NAD(+) + 4 H(+)(out). Core subunit of the mitochondrial membrane respiratory chain NADH dehydrogenase (Complex I) that is believed to belong to the minimal assembly required for catalysis. Complex I functions in the transfer of electrons from NADH to the respiratory chain. The immediate electron acceptor for the enzyme is believed to be ubiquinone. This chain is NADH-ubiquinone oxidoreductase chain 5 (ND5), found in Anopheles quadrimaculatus (Common malaria mosquito).